A 145-amino-acid polypeptide reads, in one-letter code: Immune protein Tsi4 (145 aa).

The next 2 helical transmembrane spans lie at I9–G29 and A109–F129.

The protein resides in the membrane. In terms of biological role, immunity protein that plays a role in preventing early activation of toxin Tse4. This Pseudomonas aeruginosa (strain ATCC 15692 / DSM 22644 / CIP 104116 / JCM 14847 / LMG 12228 / 1C / PRS 101 / PAO1) protein is Immune protein Tsi4.